The following is a 408-amino-acid chain: Cytochrome bc1 complex Rieske iron-sulfur subunit (408 aa).

Transmembrane regions (helical) follow at residues 56-76 (VTFW…TYIF), 98-118 (MLGI…VLYV), and 162-182 (LIMG…IAPM). The Rieske domain maps to 293–390 (HGPRNAVMLI…ITVDEEGYLI (98 aa)). [2Fe-2S] cluster is bound by residues C333, H335, C352, and H355. A disulfide bond links C338 and C354.

It belongs to the Rieske iron-sulfur protein family. As to quaternary structure, the cytochrome bc1 complex is composed of a cytochrome b (QcrB), the Rieske iron-sulfur protein (QcrA) and a diheme cytochrome c (QcrC) subunit. The bc1 complex forms a supercomplex with cytochrome c oxidase (cytochrome aa3). [2Fe-2S] cluster serves as cofactor.

It is found in the cell membrane. Functionally, iron-sulfur subunit of the cytochrome bc1 complex, an essential component of the respiratory electron transport chain required for ATP synthesis. The bc1 complex catalyzes the oxidation of menaquinol and the reduction of cytochrome c in the respiratory chain. The bc1 complex operates through a Q-cycle mechanism that couples electron transfer to generation of the proton gradient that drives ATP synthesis. This Corynebacterium glutamicum (strain ATCC 13032 / DSM 20300 / JCM 1318 / BCRC 11384 / CCUG 27702 / LMG 3730 / NBRC 12168 / NCIMB 10025 / NRRL B-2784 / 534) protein is Cytochrome bc1 complex Rieske iron-sulfur subunit (qcrA).